A 100-amino-acid polypeptide reads, in one-letter code: Urease subunit gamma (100 aa).

Belongs to the urease gamma subunit family. Probable heterotrimer of UreA (gamma), UreB (beta) and UreC (alpha) subunits. Three heterotrimers associate to form the active enzyme. The trimeric urease interacts with an accessory complex composed of UreD, UreF and UreG, which is required for the assembly of the nickel containing metallocenter of UreC. The UreE protein may also play a direct role in nickel transfer to the urease apoprotein.

Its subcellular location is the cytoplasm. It carries out the reaction urea + 2 H2O + H(+) = hydrogencarbonate + 2 NH4(+). Its pathway is nitrogen metabolism; urea degradation; CO(2) and NH(3) from urea (urease route): step 1/1. This is Urease subunit gamma from Proteus mirabilis (strain HI4320).